A 437-amino-acid polypeptide reads, in one-letter code: (S)-6-hydroxynicotine oxidase (437 aa).

Residues serine 16, 35–37 (EAR), arginine 43, 57–60 (GGAG), valine 231, serine 405, and 413–415 (EYI) contribute to the FAD site.

Belongs to the flavin monoamine oxidase family. Homodimer. FAD is required as a cofactor.

The catalysed reaction is (S)-6-hydroxynicotine + O2 + H2O = 6-hydroxypseudooxynicotine + H2O2. The enzyme catalyses (S)-6-hydroxynicotine + O2 = 6-hydroxy-N-methylmyosmine + H2O2. The protein operates within alkaloid degradation; nicotine degradation; 6-hydroxypseudooxynicotine from nicotine (S-isomer route): step 2/2. Its activity is regulated as follows. Partially inhibited by Co(2+) or Zn(2+) and significantly inhibited by Ag(+), Cu(2+) and Hg(2+). Its function is as follows. Involved in the degradation of L-nicotine. Catalyzes the oxidation of (S)-6-hydroxynicotine (6-hydroxy-L-nicotine) to 6-hydroxypseudooxynicotine. Oxidation of the pyrrolidine ring of (S)-6-hydroxynicotine leads to the formation of the optically inactive 6-hydroxy-N-methylmyosmine, which hydrolyzes spontaneously to 6-hydroxypseudooxynicotine. Acts with absolute stereospecificity on the L-form of 6-hydroxynicotine. Also involved in the degradation of nornicotine, and catalyzes the oxidation of 6-hydroxynornicotine to 6-hydroxymyosmine, which hydrolyzes to 6-hydroxypseudooxynornicotine. In vitro, converts (S)-nicotine into N-methylmyosmine, which spontaneously hydrolyzes spontaneously into pseudooxynicotine, but catalytic efficiency is about 1900-fold higher with (S)-6-hydroxynicotine. The chain is (S)-6-hydroxynicotine oxidase from Shinella sp. (strain HZN7).